A 254-amino-acid polypeptide reads, in one-letter code: 3-deoxy-manno-octulosonate cytidylyltransferase (254 aa).

The protein belongs to the KdsB family.

Its subcellular location is the cytoplasm. It carries out the reaction 3-deoxy-alpha-D-manno-oct-2-ulosonate + CTP = CMP-3-deoxy-beta-D-manno-octulosonate + diphosphate. It participates in nucleotide-sugar biosynthesis; CMP-3-deoxy-D-manno-octulosonate biosynthesis; CMP-3-deoxy-D-manno-octulosonate from 3-deoxy-D-manno-octulosonate and CTP: step 1/1. It functions in the pathway bacterial outer membrane biogenesis; lipopolysaccharide biosynthesis. Its function is as follows. Activates KDO (a required 8-carbon sugar) for incorporation into bacterial lipopolysaccharide in Gram-negative bacteria. The sequence is that of 3-deoxy-manno-octulosonate cytidylyltransferase from Chlamydia trachomatis serovar A (strain ATCC VR-571B / DSM 19440 / HAR-13).